A 103-amino-acid polypeptide reads, in one-letter code: Small ribosomal subunit protein uS10 (103 aa).

It belongs to the universal ribosomal protein uS10 family. Part of the 30S ribosomal subunit.

In terms of biological role, involved in the binding of tRNA to the ribosomes. This Psychrobacter sp. (strain PRwf-1) protein is Small ribosomal subunit protein uS10.